The sequence spans 134 residues: UPF0357 protein AAL017W (134 aa).

The N-terminal stretch at 1-23 (MFGLISLWHLFWLAVMAGILVVA) is a signal peptide.

Belongs to the UPF0357 family.

This Eremothecium gossypii (strain ATCC 10895 / CBS 109.51 / FGSC 9923 / NRRL Y-1056) (Yeast) protein is UPF0357 protein AAL017W.